The chain runs to 411 residues: Snake venom metalloproteinase ACLF (411 aa).

The signal sequence occupies residues 1–20 (MIQVLLVTLCLAAFPYQGSS). The propeptide occupies 21–189 (IILESGNVND…KKAFQLNLTP (169 aa)). The Peptidase M12B domain occupies 197–393 (RYVELVIVAD…NNPQCILNKP (197 aa)). Ca(2+) is bound by residues Glu-200 and Asp-284. 3 disulfides stabilise this stretch: Cys-308/Cys-388, Cys-348/Cys-372, and Cys-350/Cys-355. His-333 is a binding site for Zn(2+). The active site involves Glu-334. The Zn(2+) site is built by His-337 and His-343. Cys-388, Asn-391, Val-403, Asn-406, Leu-408, and Glu-410 together coordinate Ca(2+).

Belongs to the venom metalloproteinase (M12B) family. P-I subfamily. As to quaternary structure, monomer. Requires Zn(2+) as cofactor. Expressed by the venom gland.

The protein localises to the secreted. With respect to regulation, inhibited by EDTA and 1,10-phenanthroline, but not by PMSF. Snake venom zinc metalloprotease that has fibrinolytic activity. The recombinant enzyme cleaves both alpha- and beta-chains of fibrinogen, but not the gamma-chain. The recombinant protein does not produce hemorrhage in mice. Cleaves the peptide substrate Abz-LVEALYQ-EDDnp at the Ala-Leu bond in vitro. The protein is Snake venom metalloproteinase ACLF (ACLPREF) of Agkistrodon contortrix laticinctus (Broad-banded copperhead).